The primary structure comprises 359 residues: Guanine nucleotide-binding protein alpha-4 subunit (359 aa).

The N-myristoyl glycine moiety is linked to residue Gly-2. Cys-3 carries the S-palmitoyl cysteine lipid modification. The G-alpha domain occupies 31-359 (TEVKLLLLGA…RYNLKDCGLF (329 aa)). The interval 34 to 47 (KLLLLGAGESGKST) is G1 motif. Residues 39–46 (GAGESGKS), 178–184 (LRARVKS), 203–207 (DVGGQ), 272–275 (NKMD), and Ala-331 each bind GTP. Ser-46 provides a ligand contact to Mg(2+). The segment at 176–184 (DILRARVKS) is G2 motif. The G3 motif stretch occupies residues 199-208 (FRMFDVGGQR). A G4 motif region spans residues 268–275 (ILFLNKMD). A G5 motif region spans residues 329 to 334 (TCATDT).

The protein belongs to the G-alpha family. G(i/o/t/z) subfamily. As to quaternary structure, g proteins are composed of 3 units; alpha, beta and gamma. The alpha chain contains the guanine nucleotide binding site.

Its function is as follows. Guanine nucleotide-binding proteins (G proteins) are involved as modulators or transducers in various transmembrane signaling systems. In Caenorhabditis briggsae, this protein is Guanine nucleotide-binding protein alpha-4 subunit (gpa-4).